Reading from the N-terminus, the 315-residue chain is Gamma-hemolysin component C (315 aa).

The signal sequence occupies residues 1–29; it reads MLKNKILTTTLSVSLLAPLANPLLENAKA.

The protein belongs to the aerolysin family. In terms of assembly, toxicity requires sequential binding and synergistic association of a class S and a class F component which form heterooligomeric complexes. HlgB (class F) associates with either hlgA thus forming an AB toxin or with hlgC thus forming a CB toxin.

It localises to the secreted. Toxin that seems to act by forming pores in the membrane of the cell. Has a hemolytic and a leucotoxic activity. The chain is Gamma-hemolysin component C (hlgC) from Staphylococcus aureus (strain NCTC 8325 / PS 47).